The chain runs to 1146 residues: ATP-dependent helicase/deoxyribonuclease subunit B (1146 aa).

The UvrD-like helicase ATP-binding domain maps to 1-280; sequence MSLRFIYGRA…LNSKPLFRFS (280 aa). 8–15 contributes to the ATP binding site; the sequence is GRAGSGKT. The 309-residue stretch at 276–584 folds into the UvrD-like helicase C-terminal domain; the sequence is LFRFSQSPEL…LVGSLERSRS (309 aa). [4Fe-4S] cluster contacts are provided by Cys-786, Cys-1105, Cys-1108, and Cys-1114.

This sequence belongs to the helicase family. AddB/RexB type 1 subfamily. In terms of assembly, heterodimer of AddA and AddB. The cofactor is Mg(2+). It depends on [4Fe-4S] cluster as a cofactor.

The heterodimer acts as both an ATP-dependent DNA helicase and an ATP-dependent, dual-direction single-stranded exonuclease. Recognizes the chi site generating a DNA molecule suitable for the initiation of homologous recombination. The AddB subunit has 5' -&gt; 3' nuclease activity but not helicase activity. The polypeptide is ATP-dependent helicase/deoxyribonuclease subunit B (Acetivibrio thermocellus (strain ATCC 27405 / DSM 1237 / JCM 9322 / NBRC 103400 / NCIMB 10682 / NRRL B-4536 / VPI 7372) (Clostridium thermocellum)).